A 451-amino-acid chain; its full sequence is MKKEYFGTDGIRGTVGEPPITPDFMLHLGWAAGRVLARAGQSSVLVGKDTRISGYMLESALESGFAAAGVNVKLLGPMPTPAIAYLTRTLRAAAGVVISASHNPHEDNGIKFFSDDGEKLDDATELAIEAELRQPLKPAPSARLGKASRINDAPGRYIEFCKRSFPYELSLRGLRLVVDCANGATYHVAPAVFHELGAEVIPLADDPDGLNINADCGSLHPKGLQAAVREHDADAGIAFDGDGDRVIMVDHRGEVVDGDGLLYIIARQRMANGGLAGPVVGTVMSNLGLEQGIGRLGLPFLRAKVGDRYVMEMLRREGGILGGESSGHLICLDRTTTGDGIVSALQVLEAMAAQERTLAELADGMDRLPQIMVNVPISRGVPVQDHATVTDAVRDAETRLAGRGRVLLRPSGTEPVLRVMVEGPDQAEVSATAEAIAGAVREAHATLTAPR.

Ser-101 serves as the catalytic Phosphoserine intermediate. Mg(2+) contacts are provided by Ser-101, Asp-240, Asp-242, and Asp-244. Ser-101 is subject to Phosphoserine.

Belongs to the phosphohexose mutase family. The cofactor is Mg(2+). In terms of processing, activated by phosphorylation.

It catalyses the reaction alpha-D-glucosamine 1-phosphate = D-glucosamine 6-phosphate. Functionally, catalyzes the conversion of glucosamine-6-phosphate to glucosamine-1-phosphate. This Alkalilimnicola ehrlichii (strain ATCC BAA-1101 / DSM 17681 / MLHE-1) protein is Phosphoglucosamine mutase.